Reading from the N-terminus, the 302-residue chain is Sulfate adenylyltransferase subunit 2 (302 aa).

The segment at 280-302 is disordered; it reads RQGRLIDSDQSASMEQKKRQGYF.

Belongs to the PAPS reductase family. CysD subfamily. Heterodimer composed of CysD, the smaller subunit, and CysN.

The catalysed reaction is sulfate + ATP + H(+) = adenosine 5'-phosphosulfate + diphosphate. It participates in sulfur metabolism; hydrogen sulfide biosynthesis; sulfite from sulfate: step 1/3. Its function is as follows. With CysN forms the ATP sulfurylase (ATPS) that catalyzes the adenylation of sulfate producing adenosine 5'-phosphosulfate (APS) and diphosphate, the first enzymatic step in sulfur assimilation pathway. APS synthesis involves the formation of a high-energy phosphoric-sulfuric acid anhydride bond driven by GTP hydrolysis by CysN coupled to ATP hydrolysis by CysD. The polypeptide is Sulfate adenylyltransferase subunit 2 (Shewanella putrefaciens (strain CN-32 / ATCC BAA-453)).